The primary structure comprises 526 residues: Estrogen receptor beta (526 aa).

The tract at residues 1–145 (MDIKNSPSNL…SPSSKRDAHF (145 aa)) is modulating. Phosphoserine; by MAPK occurs at positions 84 and 102. 2 consecutive NR C4-type zinc fingers follow at residues 146-166 (CAVCSDYASGYHYGVWSCEGC) and 182-206 (CPATNQCTIDKNRRKSCQACRLRKC). The segment at residues 146–211 (CAVCSDYASG…RLRKCYEVGM (66 aa)) is a DNA-binding region (nuclear receptor). In terms of domain architecture, NR LBD spans 261 to 494 (SPEQLVLTLL…DLLLEMLNAH (234 aa)). The disordered stretch occupies residues 502-526 (LVTGSERSRMEESESKEGSQKPQAQ). The span at 507–520 (ERSRMEESESKEGS) shows a compositional bias: basic and acidic residues.

The protein belongs to the nuclear hormone receptor family. NR3 subfamily. As to quaternary structure, binds DNA as a homodimer. Can form a heterodimer with ESR1. Interacts with NCOA1, NCOA3, NCOA5 and NCOA6 coactivators, leading to a strong increase of transcription of target genes. Interacts with UBE1C and AKAP13. Interacts with DNTTIP2. Interacts with CCDC62 in the presence of estradiol/E2; this interaction seems to enhance the transcription of target genes. Interacts with DNAAF4. Interacts with PRMT2. Interacts with CCAR2 (via N-terminus) in a ligand-independent manner. Interacts with RBM39, in the presence of estradiol (E2). Interacts with STUB1/CHIP. Post-translationally, phosphorylation at Ser-84 and Ser-102 recruits NCOA1.

Its subcellular location is the nucleus. Its function is as follows. Nuclear hormone receptor. Binds estrogens with an affinity similar to that of ESR1/ER-alpha, and activates expression of reporter genes containing estrogen response elements (ERE) in an estrogen-dependent manner. The sequence is that of Estrogen receptor beta (ESR2) from Sus scrofa (Pig).